The chain runs to 249 residues: Acetylglutamate kinase (249 aa).

Substrate contacts are provided by residues G42–G43, R64, and N155.

The protein belongs to the acetylglutamate kinase family. ArgB subfamily.

Its subcellular location is the cytoplasm. The enzyme catalyses N-acetyl-L-glutamate + ATP = N-acetyl-L-glutamyl 5-phosphate + ADP. It participates in amino-acid biosynthesis; L-arginine biosynthesis; N(2)-acetyl-L-ornithine from L-glutamate: step 2/4. In terms of biological role, catalyzes the ATP-dependent phosphorylation of N-acetyl-L-glutamate. The sequence is that of Acetylglutamate kinase from Endomicrobium trichonymphae.